A 126-amino-acid polypeptide reads, in one-letter code: Small ribosomal subunit protein uS13 (126 aa).

Positions 101-126 are disordered; that stretch reads QKTKNNCRTRKGKKKTVANKKKKINK.

It belongs to the universal ribosomal protein uS13 family. Part of the 30S ribosomal subunit. Forms a loose heterodimer with protein S19. Forms two bridges to the 50S subunit in the 70S ribosome.

In terms of biological role, located at the top of the head of the 30S subunit, it contacts several helices of the 16S rRNA. In the 70S ribosome it contacts the 23S rRNA (bridge B1a) and protein L5 of the 50S subunit (bridge B1b), connecting the 2 subunits; these bridges are implicated in subunit movement. Contacts the tRNAs in the A and P-sites. This is Small ribosomal subunit protein uS13 from Karelsulcia muelleri (strain GWSS) (Sulcia muelleri).